Reading from the N-terminus, the 190-residue chain is Potassium-transporting ATPase KdpC subunit (190 aa).

The chain crosses the membrane as a helical span at residues 9-29 (VMFILFTIICGGIYPSVVTGI).

The protein belongs to the KdpC family. As to quaternary structure, the system is composed of three essential subunits: KdpA, KdpB and KdpC.

The protein resides in the cell inner membrane. Part of the high-affinity ATP-driven potassium transport (or Kdp) system, which catalyzes the hydrolysis of ATP coupled with the electrogenic transport of potassium into the cytoplasm. This subunit acts as a catalytic chaperone that increases the ATP-binding affinity of the ATP-hydrolyzing subunit KdpB by the formation of a transient KdpB/KdpC/ATP ternary complex. This chain is Potassium-transporting ATPase KdpC subunit, found in Citrifermentans bemidjiense (strain ATCC BAA-1014 / DSM 16622 / JCM 12645 / Bem) (Geobacter bemidjiensis).